The following is a 358-amino-acid chain: tRNA N6-adenosine threonylcarbamoyltransferase (358 aa).

His-111 and His-115 together coordinate Fe cation. Substrate is bound by residues 146-150, Asp-179, Gly-192, and Asn-294; that span reads LVSGG. A Fe cation-binding site is contributed by Asp-322.

It belongs to the KAE1 / TsaD family. The cofactor is Fe(2+).

It localises to the cytoplasm. The enzyme catalyses L-threonylcarbamoyladenylate + adenosine(37) in tRNA = N(6)-L-threonylcarbamoyladenosine(37) in tRNA + AMP + H(+). Required for the formation of a threonylcarbamoyl group on adenosine at position 37 (t(6)A37) in tRNAs that read codons beginning with adenine. Is involved in the transfer of the threonylcarbamoyl moiety of threonylcarbamoyl-AMP (TC-AMP) to the N6 group of A37, together with TsaE and TsaB. TsaD likely plays a direct catalytic role in this reaction. The sequence is that of tRNA N6-adenosine threonylcarbamoyltransferase from Helicobacter hepaticus (strain ATCC 51449 / 3B1).